The chain runs to 122 residues: Ribosome-binding factor A (122 aa).

It belongs to the RbfA family. As to quaternary structure, monomer. Binds 30S ribosomal subunits, but not 50S ribosomal subunits or 70S ribosomes.

It localises to the cytoplasm. Functionally, one of several proteins that assist in the late maturation steps of the functional core of the 30S ribosomal subunit. Associates with free 30S ribosomal subunits (but not with 30S subunits that are part of 70S ribosomes or polysomes). Required for efficient processing of 16S rRNA. May interact with the 5'-terminal helix region of 16S rRNA. The protein is Ribosome-binding factor A of Polaromonas naphthalenivorans (strain CJ2).